Reading from the N-terminus, the 597-residue chain is Scarecrow-like protein 5 (597 aa).

Residues 111 to 172 are disordered; it reads ESSSGTKSHP…SPLSGSSATN (62 aa). Residues 123–169 show a composition bias toward low complexity; sequence NNKNNSSSTTSFSSNESPISQANNNNLSRFNNHSPEENNNSPLSGSS. The GRAS domain occupies 218 to 597; the sequence is SMEMISRGDL…QPLITSCAWR (380 aa). Positions 225 to 285 are leucine repeat I (LRI); that stretch reads GDLKGVLYEC…VARLASSGSS (61 aa). The tract at residues 304-369 is VHIID; it reads MHILYEACPY…GGPPNVRITG (66 aa). Residues 335–339 carry the VHIID motif; that stretch reads VHIID. Residues 385–417 are leucine repeat II (LRII); it reads LVGQRLGKLAEMCGVPFEFHGAALCCTEVEIEK. The segment at 426–520 is PFYRE; the sequence is LAVNFPLVLH…QHCLAREVVN (95 aa). Residues 523–597 form an SAW region; it reads ACEGVEREER…QPLITSCAWR (75 aa).

It belongs to the GRAS family. In terms of tissue distribution, expressed in seedlings, roots, shoots, leaves, flowers and siliques.

It localises to the nucleus. Its function is as follows. Probable transcription factor involved in plant development. This is Scarecrow-like protein 5 (SCL5) from Arabidopsis thaliana (Mouse-ear cress).